The chain runs to 476 residues: Ribulose bisphosphate carboxylase large chain (476 aa).

Substrate is bound by residues Asn-124 and Thr-174. Lys-176 (proton acceptor) is an active-site residue. Position 178 (Lys-178) interacts with substrate. Mg(2+)-binding residues include Lys-202, Asp-204, and Glu-205. Lys-202 carries the post-translational modification N6-carboxylysine. His-295 functions as the Proton acceptor in the catalytic mechanism. Residues Arg-296, His-328, and Ser-380 each contribute to the substrate site.

This sequence belongs to the RuBisCO large chain family. Type I subfamily. Heterohexadecamer of 8 large chains and 8 small chains; disulfide-linked. The disulfide link is formed within the large subunit homodimers. The cofactor is Mg(2+). The disulfide bond which can form in the large chain dimeric partners within the hexadecamer appears to be associated with oxidative stress and protein turnover.

The protein resides in the carboxysome. The catalysed reaction is 2 (2R)-3-phosphoglycerate + 2 H(+) = D-ribulose 1,5-bisphosphate + CO2 + H2O. The enzyme catalyses D-ribulose 1,5-bisphosphate + O2 = 2-phosphoglycolate + (2R)-3-phosphoglycerate + 2 H(+). Functionally, ruBisCO catalyzes two reactions: the carboxylation of D-ribulose 1,5-bisphosphate, the primary event in carbon dioxide fixation, as well as the oxidative fragmentation of the pentose substrate in the photorespiration process. Both reactions occur simultaneously and in competition at the same active site. The polypeptide is Ribulose bisphosphate carboxylase large chain (Trichormus variabilis (strain ATCC 29413 / PCC 7937) (Anabaena variabilis)).